The chain runs to 415 residues: Dynein assembly factor with WD repeat domains 1 (415 aa).

WD repeat units lie at residues 90-129 (AHIL…ELNT), 132-174 (GHRN…HTFR), 175-214 (GHTA…EVCT), 217-256 (GHSA…KVNI), 259-298 (GHCA…CVAT), 301-340 (GHDD…CIAK), 343-384 (GHEG…QVLE), and 386-415 (HTDE…RIWR).

Belongs to the WD repeat WDR69 family. Interacts with IFT46.

The protein resides in the cytoplasm. It localises to the cytoskeleton. Its subcellular location is the flagellum basal body. It is found in the flagellum axoneme. In terms of biological role, required for axonemal dynein assembly and ciliary motility in ciliated organs, including Kupffer's vesicle, during embryogenesis. Facilitates the onset of robust cilia motility during development. In Macaca fascicularis (Crab-eating macaque), this protein is Dynein assembly factor with WD repeat domains 1 (DAW1).